Consider the following 411-residue polypeptide: Glutamate dehydrogenase 2 (411 aa).

K102 is a catalytic residue.

The protein belongs to the Glu/Leu/Phe/Val dehydrogenases family.

The protein localises to the mitochondrion. The catalysed reaction is L-glutamate + NAD(+) + H2O = 2-oxoglutarate + NH4(+) + NADH + H(+). It carries out the reaction L-glutamate + NADP(+) + H2O = 2-oxoglutarate + NH4(+) + NADPH + H(+). This Arabidopsis thaliana (Mouse-ear cress) protein is Glutamate dehydrogenase 2 (GDH2).